A 423-amino-acid polypeptide reads, in one-letter code: UPF0229 protein PLES_05841 (423 aa).

The interval 84–107 (AGEHIARPSGGGGGRGGGKASNSG) is disordered. Over residues 92-102 (SGGGGGRGGGK) the composition is skewed to gly residues.

The protein belongs to the UPF0229 family.

This chain is UPF0229 protein PLES_05841, found in Pseudomonas aeruginosa (strain LESB58).